A 245-amino-acid polypeptide reads, in one-letter code: E3 ubiquitin-protein ligase RNF138 (245 aa).

Ala2 bears the N-acetylalanine mark. The RING-type zinc-finger motif lies at 18-58 (CPVCQEVLKTPVRTAACQHVFCRKCFLTAMRESGIHCPLCR). Zn(2+)-binding residues include Cys86, Cys89, His101, and Cys105. The C2HC RNF-type zinc-finger motif lies at 86–105 (CRCCAKQIKFYRMRHHYKSC). Positions 128–153 (VGNSNRSETSASDNIETYQENTGSSG) are disordered. 2 C2H2-type zinc fingers span residues 157–180 (FKCP…NSNH) and 187–215 (VTCP…NQRH). The region spanning 225-243 (LQLDEETQYQTAVEESFQV) is the UIM domain.

Interacts with NLK. Interacts with XRCC5/Ku80. Interacts with RBBP8/CtIP. Auto-ubiquitinated.

It localises to the chromosome. The enzyme catalyses S-ubiquitinyl-[E2 ubiquitin-conjugating enzyme]-L-cysteine + [acceptor protein]-L-lysine = [E2 ubiquitin-conjugating enzyme]-L-cysteine + N(6)-ubiquitinyl-[acceptor protein]-L-lysine.. The protein operates within protein modification; protein ubiquitination. Functionally, E3 ubiquitin-protein ligase involved in DNA damage response by promoting DNA resection and homologous recombination. Recruited to sites of double-strand breaks following DNA damage and specifically promotes double-strand break repair via homologous recombination. Two different, non-exclusive, mechanisms have been proposed. According to a report, regulates the choice of double-strand break repair by favoring homologous recombination over non-homologous end joining (NHEJ): acts by mediating ubiquitination of XRCC5/Ku80, leading to remove the Ku complex from DNA breaks, thereby promoting homologous recombination. According to another report, cooperates with UBE2Ds E2 ubiquitin ligases (UBE2D1, UBE2D2, UBE2D3 or UBE2D4) to promote homologous recombination by mediating ubiquitination of RBBP8/CtIP. Together with NLK, involved in the ubiquitination and degradation of TCF/LEF. Also exhibits auto-ubiquitination activity in combination with UBE2K. May act as a negative regulator in the Wnt/beta-catenin-mediated signaling pathway. The polypeptide is E3 ubiquitin-protein ligase RNF138 (RNF138) (Bos taurus (Bovine)).